Consider the following 675-residue polypeptide: DNA ligase (675 aa).

NAD(+) is bound by residues 35–39, 84–85, and glutamate 115; these read DSEYD and SL. Lysine 117 functions as the N6-AMP-lysine intermediate in the catalytic mechanism. Arginine 138, glutamate 175, lysine 292, and lysine 316 together coordinate NAD(+). Positions 410, 413, 428, and 434 each coordinate Zn(2+). A BRCT domain is found at 593–675; it reads QIVQPLLGRT…RNFLDDTSFP (83 aa).

It belongs to the NAD-dependent DNA ligase family. LigA subfamily. Requires Mg(2+) as cofactor. It depends on Mn(2+) as a cofactor.

The enzyme catalyses NAD(+) + (deoxyribonucleotide)n-3'-hydroxyl + 5'-phospho-(deoxyribonucleotide)m = (deoxyribonucleotide)n+m + AMP + beta-nicotinamide D-nucleotide.. Its function is as follows. DNA ligase that catalyzes the formation of phosphodiester linkages between 5'-phosphoryl and 3'-hydroxyl groups in double-stranded DNA using NAD as a coenzyme and as the energy source for the reaction. It is essential for DNA replication and repair of damaged DNA. The polypeptide is DNA ligase (Nitrosococcus oceani (strain ATCC 19707 / BCRC 17464 / JCM 30415 / NCIMB 11848 / C-107)).